We begin with the raw amino-acid sequence, 147 residues long: NADH-quinone oxidoreductase subunit A (147 aa).

A run of 3 helical transmembrane segments spans residues 16–36 (FAIFLIIAIGLCCLMLVGGWF), 68–88 (FYLVAMFFVIFDVEALYLFAW), and 98–118 (VGFVEAAIFIFVLLAGLVYLV).

It belongs to the complex I subunit 3 family. As to quaternary structure, NDH-1 is composed of 13 different subunits. Subunits NuoA, H, J, K, L, M, N constitute the membrane sector of the complex.

The protein resides in the cell inner membrane. It catalyses the reaction a quinone + NADH + 5 H(+)(in) = a quinol + NAD(+) + 4 H(+)(out). Its function is as follows. NDH-1 shuttles electrons from NADH, via FMN and iron-sulfur (Fe-S) centers, to quinones in the respiratory chain. The immediate electron acceptor for the enzyme in this species is believed to be ubiquinone. Couples the redox reaction to proton translocation (for every two electrons transferred, four hydrogen ions are translocated across the cytoplasmic membrane), and thus conserves the redox energy in a proton gradient. The chain is NADH-quinone oxidoreductase subunit A from Citrobacter koseri (strain ATCC BAA-895 / CDC 4225-83 / SGSC4696).